We begin with the raw amino-acid sequence, 476 residues long: MKILFAAAEGAPFSKTGGLGDVIGALPKSLVKAGHEVGVILPYYDMTHAKFGDQVEDLFYFEVSVGWRRQYVGVKRLVLNGVSFYFIDNQHYFFRGHVYGDFDDGERFAYFQLAAVELMERIDFIPDVLHVHDYHTAMIPFLVKEKYHWIQAYQNITTVLTIHNLEFQGQFPDSMLWELFGVGYERYADGTLRWNDCLNWMKAGILYADRVTTVSPSYASEIRTPEFGCNLDQILRMESGKLVGIVNGIDTDIYNPETDPLLAHHFDKSDLSGKLENKRALQERVGLPVRDDVPVVGIVSRLTRQKGFDLVVEELHNLLQEDVQIILLGTGDPAFEQAFAWFGHAYPDKLSANILFDVTLAQEIYAASDIFLMPSRFEPCGLSQMMAMRYGTLPLVHEVGGLRDTVEPYNVYTGKGTGFSFNNFSGYWLTWTFKEALKLYADDKEAWKSLQEQAMERDFSWDTASKAYSDLYQSLL.

K15 contributes to the ADP-alpha-D-glucose binding site.

The protein belongs to the glycosyltransferase 1 family. Bacterial/plant glycogen synthase subfamily.

It carries out the reaction [(1-&gt;4)-alpha-D-glucosyl](n) + ADP-alpha-D-glucose = [(1-&gt;4)-alpha-D-glucosyl](n+1) + ADP + H(+). The protein operates within glycan biosynthesis; glycogen biosynthesis. Synthesizes alpha-1,4-glucan chains using ADP-glucose. In Streptococcus sanguinis (strain SK36), this protein is Glycogen synthase.